Reading from the N-terminus, the 130-residue chain is Small ribosomal subunit protein uS8 (130 aa).

The protein belongs to the universal ribosomal protein uS8 family. Part of the 30S ribosomal subunit.

Its function is as follows. One of the primary rRNA binding proteins, it binds directly to 16S rRNA central domain where it helps coordinate assembly of the platform of the 30S subunit. The polypeptide is Small ribosomal subunit protein uS8 (Thermococcus onnurineus (strain NA1)).